Here is a 237-residue protein sequence, read N- to C-terminus: Prospore formation at selected spindle poles protein 1 (237 aa).

It localises to the nucleus. The protein localises to the cytoplasm. The protein resides in the cytoskeleton. It is found in the microtubule organizing center. Its subcellular location is the spindle pole body. In terms of biological role, involved in the pathway that organizes the shaping and sizing of the prospore membrane (PSM) during sporulation. Required to localize MPC54 to all four spindle pole bodies, and localize DON1 and SPO14 to four prospore membranes. The chain is Prospore formation at selected spindle poles protein 1 (PFS1) from Saccharomyces cerevisiae (strain ATCC 204508 / S288c) (Baker's yeast).